Consider the following 69-residue polypeptide: Large ribosomal subunit protein uL29 (69 aa).

It belongs to the universal ribosomal protein uL29 family.

This Staphylococcus haemolyticus (strain JCSC1435) protein is Large ribosomal subunit protein uL29.